Here is a 245-residue protein sequence, read N- to C-terminus: Uridylate kinase (245 aa).

15–18 (KLSG) is a binding site for ATP. Residues 23 to 28 (GEEGFG) form an involved in allosteric activation by GTP region. Gly57 contributes to the UMP binding site. Positions 58 and 62 each coordinate ATP. Residues Asp77 and 138-145 (TGNPFCTT) each bind UMP. Thr165, Tyr171, and Asp174 together coordinate ATP.

This sequence belongs to the UMP kinase family. As to quaternary structure, homohexamer.

The protein localises to the cytoplasm. It carries out the reaction UMP + ATP = UDP + ADP. Its pathway is pyrimidine metabolism; CTP biosynthesis via de novo pathway; UDP from UMP (UMPK route): step 1/1. Allosterically activated by GTP. Inhibited by UTP. Catalyzes the reversible phosphorylation of UMP to UDP. The protein is Uridylate kinase of Shewanella putrefaciens (strain CN-32 / ATCC BAA-453).